The sequence spans 55 residues: Large ribosomal subunit protein bL33 (55 aa).

The protein belongs to the bacterial ribosomal protein bL33 family.

This chain is Large ribosomal subunit protein bL33, found in Rhodopseudomonas palustris (strain HaA2).